Reading from the N-terminus, the 461-residue chain is Mannose-6-phosphate isomerase (461 aa).

Zn(2+) contacts are provided by glutamine 107, histidine 109, glutamate 134, and histidine 291. The active site involves arginine 310.

This sequence belongs to the mannose-6-phosphate isomerase type 1 family. The cofactor is Zn(2+).

It is found in the cytoplasm. The catalysed reaction is D-mannose 6-phosphate = D-fructose 6-phosphate. It participates in nucleotide-sugar biosynthesis; GDP-alpha-D-mannose biosynthesis; alpha-D-mannose 1-phosphate from D-fructose 6-phosphate: step 1/2. Functionally, involved in the synthesis of the GDP-mannose and dolichol-phosphate-mannose required for a number of critical mannosyl transfer reactions. This Emericella nidulans (strain FGSC A4 / ATCC 38163 / CBS 112.46 / NRRL 194 / M139) (Aspergillus nidulans) protein is Mannose-6-phosphate isomerase (manA).